The chain runs to 320 residues: Short-chain dehydrogenase TIC 32 A, chloroplastic (320 aa).

Residues 40–46 (GGTSGIG), 92–93 (DL), Asn119, and Thr140 each bind NADP(+). Ser174 is a binding site for substrate. The active-site Proton acceptor is Tyr196. Residues 301-317 (DTTLADKLWDFSIKLVE) form an interaction with calmodulin region.

Belongs to the short-chain dehydrogenases/reductases (SDR) family. As to quaternary structure, part of the Tic complex. Expressed in the dehiscence zone of developing pods.

It localises to the plastid. The protein resides in the chloroplast inner membrane. Its function is as follows. Involved in protein precursor import into chloroplasts. Maybe involved in pod abscission or dehiscence (pod shatter). The chain is Short-chain dehydrogenase TIC 32 A, chloroplastic from Brassica napus (Rape).